Reading from the N-terminus, the 143-residue chain is Large ribosomal subunit protein uL11 (143 aa).

Belongs to the universal ribosomal protein uL11 family. Part of the ribosomal stalk of the 50S ribosomal subunit. Interacts with L10 and the large rRNA to form the base of the stalk. L10 forms an elongated spine to which L12 dimers bind in a sequential fashion forming a multimeric L10(L12)X complex. In terms of processing, one or more lysine residues are methylated.

Forms part of the ribosomal stalk which helps the ribosome interact with GTP-bound translation factors. The chain is Large ribosomal subunit protein uL11 from Bifidobacterium adolescentis (strain ATCC 15703 / DSM 20083 / NCTC 11814 / E194a).